A 514-amino-acid polypeptide reads, in one-letter code: MSNIRHALTVKREDDFAAWYQAVIAEADLAEESGVRGCMVIKPWGYGIWERIQRLLDDRIKATGHENVYFPIFIPLSNFEREAEHVEGFAKEMAVVTHHRLIGDGEGGLIPDPEAKLEEPLVVRPTSETIFGDAMARWIQSWRDLPLLTNQWANVVRWEMRTRMFLRTSEFLWQEGHTAHATAEEAKEHTLTMLEVYRAHAEEDLALPVIAGEKPENERFPGAVETWSIEAMMQDGKALQAGTSHYLGTNFSEAANIKFQDREGGEKYCHTTSWGVSTRMIGGVIMTHGDDDGLKVPPRIAPYQVVILPMLRDKPEDDALLAYCEDLRGKLITESAMGEPVRVLLDKKPGKAAAKRWNWVRKGAPIVIEVGGRDMENGVVSLLRRDELWNEETGKPAFQAPTPAQLTDEIASMLDSIQAGMFGTAQTWRNANVMSGCTSFEQLRDHYSDGKKHVGWVEVQWSKPTGQELEKVVEKLKDLKLTIRNVPMDTPAPTGSCIFTGKPAVEWIYVAKAY.

It belongs to the class-II aminoacyl-tRNA synthetase family. ProS type 3 subfamily. In terms of assembly, homodimer.

The protein resides in the cytoplasm. It carries out the reaction tRNA(Pro) + L-proline + ATP = L-prolyl-tRNA(Pro) + AMP + diphosphate. Its function is as follows. Catalyzes the attachment of proline to tRNA(Pro) in a two-step reaction: proline is first activated by ATP to form Pro-AMP and then transferred to the acceptor end of tRNA(Pro). The protein is Proline--tRNA ligase of Erythrobacter litoralis (strain HTCC2594).